The primary structure comprises 202 residues: Imidazoleglycerol-phosphate dehydratase (202 aa).

The protein belongs to the imidazoleglycerol-phosphate dehydratase family.

Its subcellular location is the cytoplasm. The enzyme catalyses D-erythro-1-(imidazol-4-yl)glycerol 3-phosphate = 3-(imidazol-4-yl)-2-oxopropyl phosphate + H2O. It functions in the pathway amino-acid biosynthesis; L-histidine biosynthesis; L-histidine from 5-phospho-alpha-D-ribose 1-diphosphate: step 6/9. In Acinetobacter baumannii (strain SDF), this protein is Imidazoleglycerol-phosphate dehydratase.